A 464-amino-acid chain; its full sequence is Soluble pyridine nucleotide transhydrogenase (464 aa).

An FAD-binding site is contributed by 35–44 (DDRPQVGGNC).

This sequence belongs to the class-I pyridine nucleotide-disulfide oxidoreductase family. Requires FAD as cofactor.

The protein resides in the cytoplasm. It carries out the reaction NAD(+) + NADPH = NADH + NADP(+). Its function is as follows. Conversion of NADPH, generated by peripheral catabolic pathways, to NADH, which can enter the respiratory chain for energy generation. The chain is Soluble pyridine nucleotide transhydrogenase from Azotobacter vinelandii (strain DJ / ATCC BAA-1303).